We begin with the raw amino-acid sequence, 61 residues long: Small ribosomal subunit protein uS14 (61 aa).

Positions 24, 27, 40, and 43 each coordinate Zn(2+).

The protein belongs to the universal ribosomal protein uS14 family. Zinc-binding uS14 subfamily. Part of the 30S ribosomal subunit. Contacts proteins S3 and S10. It depends on Zn(2+) as a cofactor.

Functionally, binds 16S rRNA, required for the assembly of 30S particles and may also be responsible for determining the conformation of the 16S rRNA at the A site. The protein is Small ribosomal subunit protein uS14 of Bacillus anthracis (strain A0248).